Here is a 288-residue protein sequence, read N- to C-terminus: Quinate/shikimate dehydrogenase (288 aa).

Substrate contacts are provided by Lys71 and Asp107. NAD(+) is bound by residues 132–135 (AGGA), 155–158 (NRRD), Lys205, 232–235 (CVYN), and Gly255.

It belongs to the shikimate dehydrogenase family. Homodimer.

The enzyme catalyses L-quinate + NAD(+) = 3-dehydroquinate + NADH + H(+). It catalyses the reaction L-quinate + NADP(+) = 3-dehydroquinate + NADPH + H(+). It carries out the reaction shikimate + NADP(+) = 3-dehydroshikimate + NADPH + H(+). The catalysed reaction is shikimate + NAD(+) = 3-dehydroshikimate + NADH + H(+). The protein operates within metabolic intermediate biosynthesis; chorismate biosynthesis; chorismate from D-erythrose 4-phosphate and phosphoenolpyruvate: step 4/7. Functionally, the actual biological function of YdiB remains unclear, nor is it known whether 3-dehydroshikimate or quinate represents the natural substrate. Catalyzes the reversible NAD-dependent reduction of both 3-dehydroshikimate (DHSA) and 3-dehydroquinate to yield shikimate (SA) and quinate, respectively. It can use both NAD or NADP for catalysis, however it has higher catalytic efficiency with NAD. This Escherichia coli O81 (strain ED1a) protein is Quinate/shikimate dehydrogenase.